A 443-amino-acid polypeptide reads, in one-letter code: Phosphoglucosamine mutase (443 aa).

Ser101 (phosphoserine intermediate) is an active-site residue. Residues Ser101, Asp240, Asp242, and Asp244 each coordinate Mg(2+). Phosphoserine is present on Ser101.

The protein belongs to the phosphohexose mutase family. It depends on Mg(2+) as a cofactor. Post-translationally, activated by phosphorylation.

The catalysed reaction is alpha-D-glucosamine 1-phosphate = D-glucosamine 6-phosphate. Catalyzes the conversion of glucosamine-6-phosphate to glucosamine-1-phosphate. In Psychromonas ingrahamii (strain DSM 17664 / CCUG 51855 / 37), this protein is Phosphoglucosamine mutase.